The primary structure comprises 347 residues: Dual specificity mitogen-activated protein kinase kinase 3 (347 aa).

Position 1 is an N-acetylmethionine (Met1). The span at 1 to 15 (MESPASSQPASMPQS) shows a compositional bias: low complexity. Residues 1 to 46 (MESPASSQPASMPQSKGKSKRKKDLRISCMSKPPAPNPTPPRNLDS) form a disordered region. Phosphoserine occurs at positions 3 and 15. The Protein kinase domain occupies 64–325 (LVTISELGRG…YLELMEHPFF (262 aa)). Residues 70–78 (LGRGAYGVV) and Lys93 contribute to the ATP site. Residue Asp190 is the Proton acceptor of the active site. Position 218 is a phosphoserine (Ser218). A Phosphothreonine modification is found at Thr222.

Belongs to the protein kinase superfamily. STE Ser/Thr protein kinase family. MAP kinase kinase subfamily. Component of a signaling complex containing at least AKAP13, PKN1, MAPK14, ZAK and MAP2K3. Within this complex, AKAP13 interacts directly with PKN1, which in turn recruits MAPK14, MAP2K3 and ZAK. Binds to DYRK1B/MIRK and increases its kinase activity. Part of a complex with MAP3K3, RAC1 and CCM2. Interacts with ARRB1. As to quaternary structure, (Microbial infection) Interacts with Yersinia YopJ. In terms of processing, autophosphorylated. Phosphorylation on Ser-218 and Thr-222 by MAP kinase kinase kinases positively regulates the kinase activity. Phosphorylated by TAOK2. Post-translationally, (Microbial infection) Yersinia YopJ may acetylate Ser/Thr residues, preventing phosphorylation and activation, thus blocking the MAPK signaling pathway. In terms of tissue distribution, abundant expression is seen in the skeletal muscle. It is also widely expressed in other tissues.

It catalyses the reaction L-seryl-[protein] + ATP = O-phospho-L-seryl-[protein] + ADP + H(+). The catalysed reaction is L-threonyl-[protein] + ATP = O-phospho-L-threonyl-[protein] + ADP + H(+). It carries out the reaction L-tyrosyl-[protein] + ATP = O-phospho-L-tyrosyl-[protein] + ADP + H(+). With respect to regulation, activated by dual phosphorylation on Ser-218 and Thr-222. In terms of biological role, dual specificity kinase. Is activated by cytokines and environmental stress in vivo. Catalyzes the concomitant phosphorylation of a threonine and a tyrosine residue in the MAP kinase p38. Part of a signaling cascade that begins with the activation of the adrenergic receptor ADRA1B and leads to the activation of MAPK14. The chain is Dual specificity mitogen-activated protein kinase kinase 3 (MAP2K3) from Homo sapiens (Human).